A 420-amino-acid polypeptide reads, in one-letter code: D-tagatose-1,6-bisphosphate aldolase subunit GatZ (420 aa).

The protein belongs to the GatZ/KbaZ family. GatZ subfamily. Forms a complex with GatY.

It participates in carbohydrate metabolism; D-tagatose 6-phosphate degradation; D-glyceraldehyde 3-phosphate and glycerone phosphate from D-tagatose 6-phosphate: step 2/2. Component of the tagatose-1,6-bisphosphate aldolase GatYZ that is required for full activity and stability of the Y subunit. Could have a chaperone-like function for the proper and stable folding of GatY. When expressed alone, GatZ does not show any aldolase activity. Is involved in the catabolism of galactitol. This Shigella flexneri serotype 5b (strain 8401) protein is D-tagatose-1,6-bisphosphate aldolase subunit GatZ.